Here is a 184-residue protein sequence, read N- to C-terminus: Large ribosomal subunit protein uL5 (184 aa).

Belongs to the universal ribosomal protein uL5 family. As to quaternary structure, component of the large ribosomal subunit. Interacts with Fmr1 to form the RNA-induced silencing complex (RISC), a ribonucleoprotein (RNP) complex involved in translation regulation, other components of the complex are RpL5, Rm62, AGO2 and Dcr-1.

Its subcellular location is the nucleus. The protein resides in the cytoplasm. In terms of biological role, component of the ribosome, a large ribonucleoprotein complex responsible for the synthesis of proteins in the cell. The small ribosomal subunit (SSU) binds messenger RNAs (mRNAs) and translates the encoded message by selecting cognate aminoacyl-transfer RNA (tRNA) molecules. The large subunit (LSU) contains the ribosomal catalytic site termed the peptidyl transferase center (PTC), which catalyzes the formation of peptide bonds, thereby polymerizing the amino acids delivered by tRNAs into a polypeptide chain. The nascent polypeptides leave the ribosome through a tunnel in the LSU and interact with protein factors that function in enzymatic processing, targeting, and the membrane insertion of nascent chains at the exit of the ribosomal tunnel. This Drosophila melanogaster (Fruit fly) protein is Large ribosomal subunit protein uL5 (RpL11).